A 62-amino-acid chain; its full sequence is uncharacterized protein (62 aa).

The protein resides in the plastid. The protein localises to the chloroplast. This is an uncharacterized protein from Guillardia theta (Cryptophyte).